The following is a 225-amino-acid chain: 7-cyano-7-deazaguanine synthase (225 aa).

Residue Phe10–Ala20 participates in ATP binding. Positions 190, 205, 208, and 211 each coordinate Zn(2+).

The protein belongs to the QueC family. Zn(2+) serves as cofactor.

The catalysed reaction is 7-carboxy-7-deazaguanine + NH4(+) + ATP = 7-cyano-7-deazaguanine + ADP + phosphate + H2O + H(+). The protein operates within purine metabolism; 7-cyano-7-deazaguanine biosynthesis. Functionally, catalyzes the ATP-dependent conversion of 7-carboxy-7-deazaguanine (CDG) to 7-cyano-7-deazaguanine (preQ(0)). This chain is 7-cyano-7-deazaguanine synthase, found in Helicobacter acinonychis (strain Sheeba).